A 451-amino-acid chain; its full sequence is tRNA modification GTPase MnmE (451 aa).

The (6S)-5-formyl-5,6,7,8-tetrahydrofolate site is built by R28, E85, and K124. A TrmE-type G domain is found at 220-377 (GMNVVLVGQP…LRSELLRVAG (158 aa)). N230 is a binding site for K(+). Residues 230-235 (NVGKSS), 249-255 (TDIAGTT), and 274-277 (DTAG) each bind GTP. S234 is a binding site for Mg(2+). K(+) is bound by residues T249, I251, and T254. A Mg(2+)-binding site is contributed by T255. K451 contributes to the (6S)-5-formyl-5,6,7,8-tetrahydrofolate binding site.

The protein belongs to the TRAFAC class TrmE-Era-EngA-EngB-Septin-like GTPase superfamily. TrmE GTPase family. In terms of assembly, homodimer. Heterotetramer of two MnmE and two MnmG subunits. K(+) serves as cofactor.

It localises to the cytoplasm. Its function is as follows. Exhibits a very high intrinsic GTPase hydrolysis rate. Involved in the addition of a carboxymethylaminomethyl (cmnm) group at the wobble position (U34) of certain tRNAs, forming tRNA-cmnm(5)s(2)U34. The polypeptide is tRNA modification GTPase MnmE (Aromatoleum aromaticum (strain DSM 19018 / LMG 30748 / EbN1) (Azoarcus sp. (strain EbN1))).